Here is a 309-residue protein sequence, read N- to C-terminus: Homoserine kinase (309 aa).

91-101 (PIGSGLGSSAC) contributes to the ATP binding site.

The protein belongs to the GHMP kinase family. Homoserine kinase subfamily.

Its subcellular location is the cytoplasm. The catalysed reaction is L-homoserine + ATP = O-phospho-L-homoserine + ADP + H(+). The protein operates within amino-acid biosynthesis; L-threonine biosynthesis; L-threonine from L-aspartate: step 4/5. Its function is as follows. Catalyzes the ATP-dependent phosphorylation of L-homoserine to L-homoserine phosphate. In Salmonella paratyphi B (strain ATCC BAA-1250 / SPB7), this protein is Homoserine kinase.